The sequence spans 1214 residues: BOS complex subunit NOMO1 (1214 aa).

Residues 1 to 23 (MRAGRCAAALLLLLLSGAGRAIG) form the signal peptide. Residues 24 to 1150 (SEDIVVGCGG…RKLPEQDIAQ (1127 aa)) lie on the Extracellular side of the membrane. N-linked (GlcNAc...) asparagine glycosylation is found at N42, N210, and N610. A coiled-coil region spans residues 692-720 (KSAQELRREQQLAEIETRRQEREKNGKEE). A compositionally biased stretch (basic and acidic residues) spans 708 to 726 (TRRQEREKNGKEEGEEGRA). Residues 708-733 (TRRQEREKNGKEEGEEGRARPPGQEM) form a disordered region. Residues 1151-1167 (GSYIALPLTLLLLLAGY) form a helical membrane-spanning segment. Topologically, residues 1168–1214 (NHDKLIPLLLQLTSRLQGVRALGQAASDSSGPEDMKRQTKKQKTRRT) are cytoplasmic. The tract at residues 1190–1214 (GQAASDSSGPEDMKRQTKKQKTRRT) is disordered. Phosphoserine is present on residues S1196 and S1197. Residues 1205 to 1214 (QTKKQKTRRT) show a composition bias toward basic residues.

In terms of assembly, component of the back of Sec61 (BOS) complex, composed of NCLN/Nicalin, NOMO (NOMO1, NOMO2 or NOMO3) and TMEM147. The BOS complex is part of the multi-pass translocon (MPT) complex, composed of three subcomplexes, the GEL complex (composed of RAB5IF/OPTI and TMCO1), the BOS complex (composed of NCLN/Nicalin, NOMO and TMEM147) and the PAT complex (composed of WDR83OS/Asterix and CCDC47). The MPT complex associates with the SEC61 complex.

It is found in the endoplasmic reticulum membrane. Its function is as follows. Component of the multi-pass translocon (MPT) complex that mediates insertion of multi-pass membrane proteins into the lipid bilayer of membranes. The MPT complex takes over after the SEC61 complex: following membrane insertion of the first few transmembrane segments of proteins by the SEC61 complex, the MPT complex occludes the lateral gate of the SEC61 complex to promote insertion of subsequent transmembrane regions. The sequence is that of BOS complex subunit NOMO1 from Mus musculus (Mouse).